A 462-amino-acid polypeptide reads, in one-letter code: tRNA-2-methylthio-N(6)-dimethylallyladenosine synthase (462 aa).

The region spanning 28–144 (KKLFVKTYGC…LPKMMEAVNA (117 aa)) is the MTTase N-terminal domain. [4Fe-4S] cluster-binding residues include Cys-37, Cys-73, Cys-107, Cys-181, Cys-185, and Cys-188. The Radical SAM core domain maps to 167-398 (ATRGPTAFLT…QALLTQQQRA (232 aa)). In terms of domain architecture, TRAM spans 401–462 (DAMVGRRVKV…KTNSLTGRLV (62 aa)).

Belongs to the methylthiotransferase family. MiaB subfamily. As to quaternary structure, monomer. It depends on [4Fe-4S] cluster as a cofactor.

The protein localises to the cytoplasm. The enzyme catalyses N(6)-dimethylallyladenosine(37) in tRNA + (sulfur carrier)-SH + AH2 + 2 S-adenosyl-L-methionine = 2-methylsulfanyl-N(6)-dimethylallyladenosine(37) in tRNA + (sulfur carrier)-H + 5'-deoxyadenosine + L-methionine + A + S-adenosyl-L-homocysteine + 2 H(+). Catalyzes the methylthiolation of N6-(dimethylallyl)adenosine (i(6)A), leading to the formation of 2-methylthio-N6-(dimethylallyl)adenosine (ms(2)i(6)A) at position 37 in tRNAs that read codons beginning with uridine. This chain is tRNA-2-methylthio-N(6)-dimethylallyladenosine synthase, found in Jannaschia sp. (strain CCS1).